Here is a 216-residue protein sequence, read N- to C-terminus: Dimethylamine corrinoid protein 2 (216 aa).

The B12-binding N-terminal domain occupies 1–91; sequence MASKEELLQE…EMPAGTETKK (91 aa). The 125-residue stretch at 92 to 216 folds into the B12-binding domain; the sequence is LGVIVNGTVE…AKAKELLLGK (125 aa). His-105 serves as a coordination point for methylcob(III)alamin.

It belongs to the methylamine corrinoid protein family.

It participates in one-carbon metabolism; methanogenesis from dimethylamine. Acts as a methyl group carrier between MtbB and MtbA. The protein is Dimethylamine corrinoid protein 2 (mtbC2) of Methanosarcina acetivorans (strain ATCC 35395 / DSM 2834 / JCM 12185 / C2A).